The primary structure comprises 376 residues: Dihydroorotate dehydrogenase (quinone) (376 aa).

FMN is bound by residues 74–78 (AGFDK) and Thr-98. A substrate-binding site is contributed by Lys-78. 123 to 127 (NHMGF) lines the substrate pocket. Asn-152 and Asn-185 together coordinate FMN. Position 185 (Asn-185) interacts with substrate. The active-site Nucleophile is Ser-188. Asn-190 lines the substrate pocket. FMN-binding residues include Lys-223 and Thr-251. A substrate-binding site is contributed by 252–253 (NT). FMN-binding positions include Gly-280, Gly-309, and 330 to 331 (YT). The interval 352–376 (RNPAPSSPERMPTGIQSGRKIVMDP) is disordered.

It belongs to the dihydroorotate dehydrogenase family. Type 2 subfamily. As to quaternary structure, monomer. Requires FMN as cofactor.

It is found in the cell membrane. It catalyses the reaction (S)-dihydroorotate + a quinone = orotate + a quinol. The protein operates within pyrimidine metabolism; UMP biosynthesis via de novo pathway; orotate from (S)-dihydroorotate (quinone route): step 1/1. Functionally, catalyzes the conversion of dihydroorotate to orotate with quinone as electron acceptor. The sequence is that of Dihydroorotate dehydrogenase (quinone) from Synechococcus sp. (strain JA-3-3Ab) (Cyanobacteria bacterium Yellowstone A-Prime).